Here is a 192-residue protein sequence, read N- to C-terminus: UPF0301 protein Bmul_2524/BMULJ_00714 (192 aa).

This sequence belongs to the UPF0301 (AlgH) family.

The chain is UPF0301 protein Bmul_2524/BMULJ_00714 from Burkholderia multivorans (strain ATCC 17616 / 249).